The sequence spans 557 residues: 2-succinyl-5-enolpyruvyl-6-hydroxy-3-cyclohexene-1-carboxylate synthase (557 aa).

The protein belongs to the TPP enzyme family. MenD subfamily. Homodimer. Mg(2+) serves as cofactor. Requires Mn(2+) as cofactor. The cofactor is thiamine diphosphate.

The catalysed reaction is isochorismate + 2-oxoglutarate + H(+) = 5-enolpyruvoyl-6-hydroxy-2-succinyl-cyclohex-3-ene-1-carboxylate + CO2. It functions in the pathway quinol/quinone metabolism; 1,4-dihydroxy-2-naphthoate biosynthesis; 1,4-dihydroxy-2-naphthoate from chorismate: step 2/7. Its pathway is quinol/quinone metabolism; menaquinone biosynthesis. Its function is as follows. Catalyzes the thiamine diphosphate-dependent decarboxylation of 2-oxoglutarate and the subsequent addition of the resulting succinic semialdehyde-thiamine pyrophosphate anion to isochorismate to yield 2-succinyl-5-enolpyruvyl-6-hydroxy-3-cyclohexene-1-carboxylate (SEPHCHC). The protein is 2-succinyl-5-enolpyruvyl-6-hydroxy-3-cyclohexene-1-carboxylate synthase of Staphylococcus aureus (strain MSSA476).